Consider the following 633-residue polypeptide: MGKVVGIDLGTTNSCVAVMEGGKPTVIANAEGFRTTPSVVAYTKNQDQLVGQIAKRQAVMNPENTFYSAKRFVGRRVDEVNEESKEVSYSVEKSGSSVKLKCPVLDKQFSPEEVAAQVLRKLSEDAGKYLGENINQAVITVPAYFNDSQRQATKDAGKIAGLEVLRIINEPTAAALAYGLDRKSNERILVFDLGGGTFDVSVLEVGDGVFEVLSTSGDTHLGGDDFDKVIVDHLAATFKANEGIDLRQDKQALQRLTEAAEKAKIELSNATQSEINLPFITATPEGPKHVDLTLTRAKFEELASNLIDRCRVPVEQALKDAKLSTGEIDEIVMVGGSTRMPAVKELVKRVTGKDPNQTVNPDEVVAVGAAIQGGVLAGEVKDILLLDVTPLSLGVETLGGVMTKMITRNTTVPTKKTETYSTAVDGQTNVEIHVLQGEREMASDNKSLGTFRLDGIPPSPRGVPQIEVTFDIDANGILSVTAKDKGSGKEQSISITGASTLSDNEVEKMVKDAETNATADKEKRDRIDIKNQAETLVYQTEKQLGELGDKVDEEAKAKVEAKRIQLKEATEKDDYETMKTLVEDLQKELYSLGASVYQQSNAASQAADGTSSESNNSTEGNDDVIDAEFTESK.

Phosphothreonine; by autocatalysis is present on Thr-197. The segment at 600–633 (SNAASQAADGTSSESNNSTEGNDDVIDAEFTESK) is disordered. Over residues 608-619 (DGTSSESNNSTE) the composition is skewed to low complexity. A compositionally biased stretch (acidic residues) spans 620–633 (GNDDVIDAEFTESK).

This sequence belongs to the heat shock protein 70 family.

In terms of biological role, acts as a chaperone. The chain is Chaperone protein dnaK2 (dnaK2) from Prochlorococcus marinus (strain SARG / CCMP1375 / SS120).